A 684-amino-acid polypeptide reads, in one-letter code: Glycine--tRNA ligase beta subunit (684 aa).

This sequence belongs to the class-II aminoacyl-tRNA synthetase family. Tetramer of two alpha and two beta subunits.

The protein resides in the cytoplasm. It catalyses the reaction tRNA(Gly) + glycine + ATP = glycyl-tRNA(Gly) + AMP + diphosphate. The sequence is that of Glycine--tRNA ligase beta subunit from Ectopseudomonas mendocina (strain ymp) (Pseudomonas mendocina).